The primary structure comprises 3005 residues: Highly reducing polyketide synthase AFT9-1 (3005 aa).

A Ketosynthase family 3 (KS3) domain is found at 1–337 (MDPQQRLLLE…GTNAHAILER (337 aa)). Residues C87, H222, and H260 each act as for beta-ketoacyl synthase activity in the active site. The interval 437–751 (VFTGQGAQWP…SYMSALVRGS (315 aa)) is malonyl-CoA:ACP transacylase (MAT) domain. Residues 821–936 (HDLLGLKMTD…GSVEVKYAAA (116 aa)) form an N-terminal hotdog fold region. Residues 821–1114 (HDLLGLKMTD…SGLELRRLAP (294 aa)) form a dehydratase (DH) domain region. Residues 821 to 1118 (HDLLGLKMTD…LRRLAPTGQP (298 aa)) enclose the PKS/mFAS DH domain. Catalysis depends on H853, which acts as the Proton acceptor; for dehydratase activity. Residues 963–1118 (IEKISSQELY…LRRLAPTGQP (156 aa)) form a C-terminal hotdog fold region. The active-site Proton donor; for dehydratase activity is the D1028. The segment at 1259–1445 (ADDSSKRCYD…MRKASLNMQL (187 aa)) is methyltransferase (CMet) domain. Residues 1683 to 1985 (EFMKMPVFTE…QHHRNESTVL (303 aa)) are enoyl reductase (ER) (ER) domain. Residues 2008–2191 (ATYVVSGGRG…YMSLNVGTIE (184 aa)) form a ketoreductase (KR) domain region. The 83-residue stretch at 2293-2375 (TRDFEKISQL…SLGAKVASRS (83 aa)) folds into the Carrier domain. O-(pantetheine 4'-phosphoryl)serine is present on S2335.

Its pathway is mycotoxin biosynthesis. Its function is as follows. Highly reducing polyketide synthase; part of the gene clusters that mediate the biosynthesis of the host-selective toxins (HSTs) AF-toxins responsible for Alternaria black spot of strawberry disease by the strawberry pathotype. AF-toxin I and III are valine derivatives of 2,3-dyhydroxy-isovaleric acid and 2-hydroxy-isovaleric acid respectively, while AF II is an isoleucine derivative of 2-hydroxy-valeric acid. These derivatives are bound to a 9,10-epoxy-8-hydroxy-9-methyl-decatrienoic acid (EDA) moiety. On cellular level, AF-toxins affect plasma membrane of susceptible cells and cause a sudden increase in loss of K(+) after a few minutes of toxin treatment. The aldo-keto reductase AFTS1 catalyzes the conversion of 2-keto-isovaleric acid (2-KIV) to 2-hydroxy-isovaleric acid (2-HIV) by reduction of its ketone to an alcohol. The acyl-CoA ligase AFT1, the hydrolase AFT2 and the enoyl-CoA hydratases AFT3 and AFT6, but also the polyketide synthase AFT9, the acyl-CoA dehydrogenase AFT10, the cytochrome P450 monooxygenase AFT11 and the oxidoreductase AFT12 are all involved in the biosynthesis of the AK-, AF- and ACT-toxin common EDA structural moiety. The exact function of each enzyme, and of additional enzymes identified within the AF-toxin clusters have still to be determined. In Alternaria alternata (Alternaria rot fungus), this protein is Highly reducing polyketide synthase AFT9-1.